The primary structure comprises 92 residues: Small ribosomal subunit protein uS19 (92 aa).

The protein belongs to the universal ribosomal protein uS19 family.

Functionally, protein S19 forms a complex with S13 that binds strongly to the 16S ribosomal RNA. The polypeptide is Small ribosomal subunit protein uS19 (rpsS) (Synechocystis sp. (strain ATCC 27184 / PCC 6803 / Kazusa)).